A 124-amino-acid polypeptide reads, in one-letter code: Large ribosomal subunit protein bL17 (124 aa).

This sequence belongs to the bacterial ribosomal protein bL17 family. As to quaternary structure, part of the 50S ribosomal subunit. Contacts protein L32.

This chain is Large ribosomal subunit protein bL17, found in Borrelia turicatae (strain 91E135).